The following is a 426-amino-acid chain: 3-phosphoshikimate 1-carboxyvinyltransferase (426 aa).

Residues K20, S21, and R25 each coordinate 3-phosphoshikimate. Residue K20 participates in phosphoenolpyruvate binding. The phosphoenolpyruvate site is built by G92 and R120. Residues S166, Q168, D312, and K339 each coordinate 3-phosphoshikimate. Residue Q168 participates in phosphoenolpyruvate binding. The active-site Proton acceptor is D312. Phosphoenolpyruvate is bound by residues R343 and R385.

The protein belongs to the EPSP synthase family. As to quaternary structure, monomer.

The protein localises to the cytoplasm. The catalysed reaction is 3-phosphoshikimate + phosphoenolpyruvate = 5-O-(1-carboxyvinyl)-3-phosphoshikimate + phosphate. Its pathway is metabolic intermediate biosynthesis; chorismate biosynthesis; chorismate from D-erythrose 4-phosphate and phosphoenolpyruvate: step 6/7. Its function is as follows. Catalyzes the transfer of the enolpyruvyl moiety of phosphoenolpyruvate (PEP) to the 5-hydroxyl of shikimate-3-phosphate (S3P) to produce enolpyruvyl shikimate-3-phosphate and inorganic phosphate. The protein is 3-phosphoshikimate 1-carboxyvinyltransferase of Enterococcus faecalis (strain ATCC 700802 / V583).